A 369-amino-acid chain; its full sequence is Sesquiterpene cyclase hepA (369 aa).

Mg(2+)-binding residues include Asp100, Asn248, Ser252, and Asp256. A DDXXD motif motif is present at residues Asp100–Asp104. Residues Asn255–Lys262 carry the (N,D)D(L,I,V)X(S,T)XXXE motif motif.

The protein belongs to the terpene synthase family. Mg(2+) is required as a cofactor.

In terms of biological role, sesquiterpene cyclase; part of the gene cluster that mediates the biosynthesis of heptelidic acid (HA), a sesquiterpene lactone that acts as an inhibitor of glyceraldehyde-3-phosphatedehydrogenase (GAPDH) and a growth inhibitor of the salt-tolerant lactic acid bacteria in soy sauce brewing. The sequence is that of Sesquiterpene cyclase hepA from Aspergillus oryzae (strain ATCC 42149 / RIB 40) (Yellow koji mold).